The sequence spans 217 residues: Probable transaldolase (217 aa).

Residue lysine 85 is the Schiff-base intermediate with substrate of the active site.

Belongs to the transaldolase family. Type 3B subfamily.

The protein resides in the cytoplasm. It catalyses the reaction D-sedoheptulose 7-phosphate + D-glyceraldehyde 3-phosphate = D-erythrose 4-phosphate + beta-D-fructose 6-phosphate. Its pathway is carbohydrate degradation; pentose phosphate pathway; D-glyceraldehyde 3-phosphate and beta-D-fructose 6-phosphate from D-ribose 5-phosphate and D-xylulose 5-phosphate (non-oxidative stage): step 2/3. Its function is as follows. Transaldolase is important for the balance of metabolites in the pentose-phosphate pathway. This Lachnoclostridium phytofermentans (strain ATCC 700394 / DSM 18823 / ISDg) (Clostridium phytofermentans) protein is Probable transaldolase.